A 568-amino-acid polypeptide reads, in one-letter code: Urease subunit alpha (568 aa).

The Urease domain occupies 130–568 (GGIDTHIHFI…LPMAQRYFLF (439 aa)). The Ni(2+) site is built by His135, His137, and Lys218. The residue at position 218 (Lys218) is an N6-carboxylysine. Substrate is bound at residue His220. 2 residues coordinate Ni(2+): His247 and His273. The Proton donor role is filled by His321. Ni(2+) is bound at residue Asp361.

This sequence belongs to the metallo-dependent hydrolases superfamily. Urease alpha subunit family. In terms of assembly, heterotrimer of UreA (gamma), UreB (beta) and UreC (alpha) subunits. Three heterotrimers associate to form the active enzyme. Requires Ni cation as cofactor. In terms of processing, carboxylation allows a single lysine to coordinate two nickel ions.

The protein localises to the cytoplasm. It catalyses the reaction urea + 2 H2O + H(+) = hydrogencarbonate + 2 NH4(+). Its pathway is nitrogen metabolism; urea degradation; CO(2) and NH(3) from urea (urease route): step 1/1. The sequence is that of Urease subunit alpha from Burkholderia pseudomallei (strain K96243).